Consider the following 144-residue polypeptide: Transcription antitermination protein NusB (144 aa).

This sequence belongs to the NusB family.

Involved in transcription antitermination. Required for transcription of ribosomal RNA (rRNA) genes. Binds specifically to the boxA antiterminator sequence of the ribosomal RNA (rrn) operons. The chain is Transcription antitermination protein NusB from Pelotomaculum thermopropionicum (strain DSM 13744 / JCM 10971 / SI).